Consider the following 277-residue polypeptide: Small ribosomal subunit protein uS2 (277 aa).

The disordered stretch occupies residues 226 to 277 (GQQARADRGEDLGAAVEPVAEPALVEEAAAPVTEDEQVPAEAAAETERQSDA). Residues 239-257 (AAVEPVAEPALVEEAAAPV) show a composition bias toward low complexity.

This sequence belongs to the universal ribosomal protein uS2 family.

The protein is Small ribosomal subunit protein uS2 of Sphingopyxis alaskensis (strain DSM 13593 / LMG 18877 / RB2256) (Sphingomonas alaskensis).